We begin with the raw amino-acid sequence, 703 residues long: Pinin (703 aa).

N-acetylalanine is present on A2. The stretch at 2–32 (AVAVRTLQEQLEKAKESLKNVDENIRKLTGR) forms a coiled coil. Residues 46–148 (ALSGPGGGRG…ETPERPGPIF (103 aa)) are disordered. S48 bears the Phosphoserine mark. Omega-N-methylarginine is present on R54. A phosphoserine mark is found at S58, S66, S96, and S100. A compositionally biased stretch (basic and acidic residues) spans 87 to 100 (GGERRTRRESRQES). A Glycyl lysine isopeptide (Lys-Gly) (interchain with G-Cter in SUMO2) cross-link involves residue K109. S114 and S115 each carry phosphoserine. K121 is covalently cross-linked (Glycyl lysine isopeptide (Lys-Gly) (interchain with G-Cter in SUMO2)). T125 is subject to Phosphothreonine. Residues K138 and K157 each participate in a glycyl lysine isopeptide (Lys-Gly) (interchain with G-Cter in SUMO2) cross-link. A Glycyl lysine isopeptide (Lys-Gly) (interchain with G-Cter in SUMO1); alternate cross-link involves residue K159. K159 participates in a covalent cross-link: Glycyl lysine isopeptide (Lys-Gly) (interchain with G-Cter in SUMO2); alternate. A coiled-coil region spans residues 165–236 (ATERQKRRQE…HNAKIIKYIR (72 aa)). Residues 223 to 285 (EWNEHNAKII…AEQINKMEAR (63 aa)) form a sufficient for PSAP complex assembly region. K230 participates in a covalent cross-link: Glycyl lysine isopeptide (Lys-Gly) (interchain with G-Cter in SUMO2). K240 is modified (N6-acetyllysine; alternate). An N6-succinyllysine; alternate modification is found at K240. Residues K281, K306, and K313 each participate in a glycyl lysine isopeptide (Lys-Gly) (interchain with G-Cter in SUMO2) cross-link. 3 disordered regions span residues 284–314 (ARPRRQSMKEKEHQVVVRNEEQKSEQEEGKV), 331–394 (RVGT…EEVM), and 408–703 (AEQE…PGQL). 2 stretches are compositionally biased toward basic and acidic residues: residues 348–357 (EIPIVHSDAE) and 366–386 (KQEMEVKMEEETEVRESEKQQ). S354 carries the post-translational modification Phosphoserine. Positions 354–411 (SDAEKEQEEEEQKQEMEVKMEEETEVRESEKQQDSQPEEVMDVLEMVESVKNVIAEQE) form a coiled coil. Residues K366 and K372 each participate in a glycyl lysine isopeptide (Lys-Gly) (interchain with G-Cter in SUMO2) cross-link. Residues S382 and S388 each carry the phosphoserine modification. Basic and acidic residues predominate over residues 417–433 (QVERVEPSENEASKELE). 2 positions are modified to phosphoserine: S450 and S457. A compositionally biased stretch (low complexity) spans 479–489 (PMAQPQAQSLP). Residues K541 and K549 each participate in a glycyl lysine isopeptide (Lys-Gly) (interchain with G-Cter in SUMO2) cross-link. Position 565 is a phosphoserine (S565). A Glycyl lysine isopeptide (Lys-Gly) (interchain with G-Cter in SUMO2) cross-link involves residue K566. The segment covering 572-588 (RSRSRGRARNRTSKSRS) has biased composition (basic residues). Residues 589–642 (RSSSSSSSSSSSTSSSSGSSSSSGSSSSRTSSSSSSTSGSSSRDSSSSTTSSSE) show a composition bias toward low complexity. Residues 646-664 (RSRGRGHNRDRKHRRSVDR) are compositionally biased toward basic residues. Residues 665-676 (KRRDASGLERSH) show a composition bias toward basic and acidic residues. S670 and S691 each carry phosphoserine.

The protein belongs to the pinin family. As to quaternary structure, found in a mRNA splicing-dependent exon junction complex (EJC). Found in a complex with SR proteins. Found in a mRNP complex with RNPS1. Component of the PSAP complex consisting of RNPS1, SAP18 and PNN. Interacts with PNISR, CTBP1, CTBP2, KRT8, KRT18, KRT19, PS1D/PNO40, PPIG, RNPS1, SFRS4 and SRRM2. Identified in the spliceosome C complex.

The protein resides in the nucleus speckle. Its subcellular location is the cell junction. It localises to the desmosome. Transcriptional activator binding to the E-box 1 core sequence of the E-cadherin promoter gene; the core-binding sequence is 5'CAGGTG-3'. Capable of reversing CTBP1-mediated transcription repression. Auxiliary component of the splicing-dependent multiprotein exon junction complex (EJC) deposited at splice junction on mRNAs. The EJC is a dynamic structure consisting of core proteins and several peripheral nuclear and cytoplasmic associated factors that join the complex only transiently either during EJC assembly or during subsequent mRNA metabolism. Participates in the regulation of alternative pre-mRNA splicing. Associates to spliced mRNA within 60 nt upstream of the 5'-splice sites. Component of the PSAP complex which binds RNA in a sequence-independent manner and is proposed to be recruited to the EJC prior to or during the splicing process and to regulate specific excision of introns in specific transcription subsets. Involved in the establishment and maintenance of epithelia cell-cell adhesion. This chain is Pinin (PNN), found in Bos taurus (Bovine).